The following is a 2130-amino-acid chain: DNA polymerase zeta catalytic subunit (2130 aa).

Disordered regions lie at residues Pro528–Leu635, Gly734–Ala891, Phe927–Pro954, and Gln1189–Gln1243. Over residues Thr553–Ile574 the composition is skewed to low complexity. Residues Pro620–Gly629 show a composition bias toward polar residues. Positions Cys735 to Pro753 are enriched in basic and acidic residues. 3 stretches are compositionally biased toward polar residues: residues Ser771–Asp786, Leu794–Gly808, and Asp818–Glu835. Residues Leu840–Arg860 are compositionally biased toward basic and acidic residues. Over residues Thr938–Pro954 the composition is skewed to polar residues. Residues Pro1228–Gln1243 show a composition bias toward low complexity. Cys2041, Cys2045, Cys2054, and Cys2057 together coordinate Zn(2+). Cys2086, Cys2089, Cys2098, and Cys2103 together coordinate [4Fe-4S] cluster. Positions Cys2086–Cys2103 match the CysB motif motif.

This sequence belongs to the DNA polymerase type-B family. As to quaternary structure, catalytic subunit of the zeta DNA polymerase complex, which consists of PolZ1/DNApol-zeta and the accessory component PolZ2/Rev7. Interacts with the apurinic/apyrimidinic (AP) endonuclease Rrp1; the interaction is likely indirect and mediated via PolZ2. [4Fe-4S] cluster is required as a cofactor.

It catalyses the reaction DNA(n) + a 2'-deoxyribonucleoside 5'-triphosphate = DNA(n+1) + diphosphate. Inhibited by tetracyclic diterpene antibiotic aphidicolin. Its function is as follows. As the catalytic subunit of the DNA polymerase zeta complex, plays a crucial role in translesion DNA synthesis (TLS) and various DNA repair mechanisms. Lacks an intrinsic 3'-5' exonuclease activity and thus has no proofreading function. During homologous recombination (HR) repair, has a overlapping role with the error-prone translesion polymerase eta to initiate repair synthesis which is completed by end joining or another polymerase that can bind and reinitiate synthesis. May participate in the Rrp1-dependent base excision repair (BER) pathway responsible for repair of DNA lesions that gives rise to apurinic/apyrimidinic (AP) sites. Unlike mammalian orthologs, it is not an error-prone polymerase. In Drosophila melanogaster (Fruit fly), this protein is DNA polymerase zeta catalytic subunit.